Consider the following 1109-residue polypeptide: Protein phosphatase 1 regulatory subunit 3A (1109 aa).

A phosphoserine; by GSK3 mark is found at S40 and S44. S48 carries the post-translational modification Phosphoserine; by PKA and ISPK. S51 is subject to Phosphoserine. T58 bears the Phosphothreonine mark. The short motif at 64–67 is the PP1-binding motif element; sequence RRVS. Position 67 is a phosphoserine; by PKA (S67). The region spanning 124-232 is the CBM21 domain; that stretch reads QLQVQKAMLE…NNNGTNYTLV (109 aa). Residues 236 to 251 are compositionally biased toward basic and acidic residues; it reads KEPEPEPGKPLEEAPS. 4 disordered regions span residues 236-278, 340-424, 436-455, and 493-517; these read KEPE…NFEN, GKNT…SDGS, DDNA…CSFP, and YFKK…KEKR. Composition is skewed to polar residues over residues 340-352, 360-384, and 396-406; these read GKNT…SNIP, KNQS…SAES, and YSSGNESSHQP. Position 843 is a phosphoserine (S843). Disordered stretches follow at residues 945 to 985 and 1011 to 1048; these read SATE…RKEK and SREN…ETQD. A compositionally biased stretch (polar residues) spans 951 to 963; that stretch reads YNCSPTRETQGQP. Composition is skewed to basic and acidic residues over residues 966 to 985 and 1011 to 1034; these read KPEE…RKEK and SREN…KEFE. Polar residues predominate over residues 1035–1048; it reads SSASSSLPVQETQD. The helical transmembrane segment at 1066 to 1086 threads the bilayer; it reads FLLFLMFLVTVYHYDLMIGLA.

As to quaternary structure, interacts with PPP1CC catalytic subunit of PP1, and associates with glycogen. Phosphorylation at Ser-48 by ISPK stimulates the dephosphorylation of glycogen synthase and phosphorylase kinase. As to expression, skeletal muscle, diaphragm and cardiac muscle.

Its subcellular location is the membrane. In terms of biological role, seems to act as a glycogen-targeting subunit for PP1. PP1 is essential for cell division, and participates in the regulation of glycogen metabolism, muscle contractility and protein synthesis. Plays an important role in glycogen synthesis but is not essential for insulin activation of glycogen synthase. In Oryctolagus cuniculus (Rabbit), this protein is Protein phosphatase 1 regulatory subunit 3A (PPP1R3A).